Reading from the N-terminus, the 356-residue chain is Probable arabinogalactan endo-beta-1,4-galactanase A (356 aa).

The N-terminal stretch at 1-21 (MLGKTVLLPLLVLLCHSLASA) is a signal peptide. N-linked (GlcNAc...) asparagine glycosylation is present at N133. E157 serves as the catalytic Proton donor. E268 functions as the Nucleophile in the catalytic mechanism.

The protein belongs to the glycosyl hydrolase 53 family.

It localises to the secreted. The catalysed reaction is The enzyme specifically hydrolyzes (1-&gt;4)-beta-D-galactosidic linkages in type I arabinogalactans.. Endogalactanase involved in the degradation of plant cell wall polysaccharides, and more particularly of hairy regions of pectin. The polypeptide is Probable arabinogalactan endo-beta-1,4-galactanase A (galA) (Aspergillus fumigatus (strain CBS 144.89 / FGSC A1163 / CEA10) (Neosartorya fumigata)).